We begin with the raw amino-acid sequence, 141 residues long: uncharacterized protein (141 aa).

Residues 24 to 52 (KVQTALQKEAKTIKREQKKIKDEIDTFKT) adopt a coiled-coil conformation.

This is an uncharacterized protein from Invertebrate iridescent virus 6 (IIV-6).